Consider the following 158-residue polypeptide: NAD(P)H-quinone oxidoreductase subunit J, chloroplastic (158 aa).

The protein belongs to the complex I 30 kDa subunit family. NDH is composed of at least 16 different subunits, 5 of which are encoded in the nucleus.

Its subcellular location is the plastid. It is found in the chloroplast thylakoid membrane. It catalyses the reaction a plastoquinone + NADH + (n+1) H(+)(in) = a plastoquinol + NAD(+) + n H(+)(out). The enzyme catalyses a plastoquinone + NADPH + (n+1) H(+)(in) = a plastoquinol + NADP(+) + n H(+)(out). Functionally, NDH shuttles electrons from NAD(P)H:plastoquinone, via FMN and iron-sulfur (Fe-S) centers, to quinones in the photosynthetic chain and possibly in a chloroplast respiratory chain. The immediate electron acceptor for the enzyme in this species is believed to be plastoquinone. Couples the redox reaction to proton translocation, and thus conserves the redox energy in a proton gradient. This is NAD(P)H-quinone oxidoreductase subunit J, chloroplastic from Cucumis sativus (Cucumber).